A 396-amino-acid polypeptide reads, in one-letter code: L-cysteine desulfidase (396 aa).

Cys-23 functions as the Proton acceptor in the catalytic mechanism. The [4Fe-4S] cluster site is built by Cys-288, Cys-330, and Cys-337.

Belongs to the L-cysteine desulfidase family. In terms of assembly, homotrimer. It depends on [4Fe-4S] cluster as a cofactor.

The enzyme catalyses L-cysteine + H2O = hydrogen sulfide + pyruvate + NH4(+) + H(+). Functionally, catalyzes the cleavage of L-cysteine to form 2-aminoprop-2-enoate and sulfide. The former then spontaneously hydrolyzes to pyruvate and NH(3). May be responsible for the production of sulfide required for the biosynthesis of iron-sulfur centers in this archaea. The polypeptide is L-cysteine desulfidase (Methanococcus maripaludis (strain C6 / ATCC BAA-1332)).